A 435-amino-acid chain; its full sequence is Xylose isomerase (435 aa).

Active-site residues include H100 and D103. The Mg(2+) site is built by E231, E267, H270, D295, D306, D308, and D338.

Belongs to the xylose isomerase family. As to quaternary structure, homotetramer. Requires Mg(2+) as cofactor.

The protein localises to the cytoplasm. The enzyme catalyses alpha-D-xylose = alpha-D-xylulofuranose. This chain is Xylose isomerase, found in Brucella suis biovar 1 (strain 1330).